We begin with the raw amino-acid sequence, 675 residues long: Protein PALS1 (675 aa).

Disordered stretches follow at residues 1-34 (MTTS…KHRE) and 51-78 (RRSA…KKQE). Positions 1–345 (MTTSHMNGHV…QQIKPPPAKE (345 aa)) are required for the correct localization of PALS1 and PATJ at cell-cell contacts and the normal formation of tight junctions and adherens junctions. Basic and acidic residues-rich tracts occupy residues 10–34 (VTEE…KHRE) and 54–78 (AQLE…KKQE). Phosphoserine is present on residues Ser-14 and Ser-25. An interaction with PARD6B region spans residues 21–140 (VDLASPEEHQ…LKHIQHTLVD (120 aa)). 2 positions are modified to phosphoserine: Ser-83 and Ser-84. L27 domains lie at 120 to 177 (KILE…NKAS) and 179 to 235 (PFPL…MQLE). Residues 181–243 (PLISNAQDLA…LEPITDERVY (63 aa)) are interaction with LIN7C. A PDZ domain is found at 256–336 (IVRIEKARDI…TLTFVLIPSQ (81 aa)). Positions 345–417 (ETVIHVKAHF…PGKSFQQQRE (73 aa)) constitute an SH3 domain. One can recognise a Guanylate kinase-like domain in the interval 479 to 660 (KRPIILIGPQ…AYQELLRLIN (182 aa)). Position 486-493 (486-493 (GPQNCGQN)) interacts with ATP.

Belongs to the MAGUK family. Heterodimer with MPP1. Forms a heterotrimeric complex composed of PALS1, LIN7B and PATJ; the N-terminal L27 domain of PALS1 interacts with the L27 domain of PATJ and the C-terminal L27 domain of PALS1 interacts with the L27 domain of LIN7B. Component of a complex composed of PALS1, CRB1 and MPP4. Component of a complex whose core is composed of ARHGAP17, AMOT, PALS1, PATJ and PARD3/PAR3. Component of a complex composed of PALS1, CRB1 and EPB41L5. Within the complex, interacts (via HOOK domain) with EPB41L5 (via FERM domain), and interacts with CRB1 (via intracellular domain). Component of a complex composed of PALS1, MPP3 and CRB1; PALS1 acts as a bridging protein between MPP3 (via guanylate kinase-like domain) and CRB1. Component of a complex composed of CRB3, PALS1 and PATJ. As part of the Crumbs complex; interacts with WWP1, the interaction is enhanced by AMOTL2 and facilitates WWP1 localization to the plasma membrane. The Crumbs complex promotes monoubiquitination of AMOTL2 by WWP1, which activates the Hippo signaling pathway. Interacts (via PDZ domain) with PATJ (via N-terminus). Interacts with EZR. Interacts (via PDZ domain) with CRB1 (via C-terminal ERLI motif). While the PDZ domain is sufficient for interaction with CRB1, the adjacent SH3 and guanylate kinase-like domains are likely to contribute to a high affinity interaction. Interacts with WWTR1/TAZ (via WW domain). Interacts with MPP7. Interacts (via PDZ domain) with CRB3 (via C-terminus). Interacts with LIN7C. Interacts with MPDZ. Interacts with PARD6B. Interacts with SC6A1. Interacts with CDH5; the interaction promotes PALS1 localization to cell junctions and is required for CDH5-mediated vascular lumen formation and endothelial cell. Interacts with NPHP1 (via coiled coil and SH3 domains). Interacts with NPHP4. Interacts with CRB2. As to quaternary structure, (Microbial infection) Interacts (via PDZ domain) with human coronaviruses SARS-CoV and, probably, SARS-CoV-2 envelope small membrane protein E (via C-terminus); this inhibits the interaction between PALS1 and CRB3. As to expression, expressed at the outer limiting membrane in the retina (at protein level). Expressed in T lymphocytes (at protein level). Expressed in the kidney (at protein level).

Its subcellular location is the golgi apparatus. The protein resides in the cell membrane. It localises to the endomembrane system. The protein localises to the cell junction. It is found in the tight junction. Its subcellular location is the adherens junction. The protein resides in the cell projection. It localises to the axon. The protein localises to the perikaryon. It is found in the apical cell membrane. Its subcellular location is the endoplasmic reticulum-Golgi intermediate compartment. In terms of biological role, plays a role in tight junction biogenesis and in the establishment of cell polarity in epithelial cells. Also involved in adherens junction biogenesis by ensuring correct localization of the exocyst complex protein EXOC4/SEC8 which allows trafficking of adherens junction structural component CDH1 to the cell surface. Plays a role through its interaction with CDH5 in vascular lumen formation and endothelial membrane polarity. Required during embryonic and postnatal retinal development. Required for the maintenance of cerebellar progenitor cells in an undifferentiated proliferative state, preventing premature differentiation, and is required for cerebellar histogenesis, fissure formation, cerebellar layer organization and cortical development. Plays a role in neuronal progenitor cell survival, potentially via promotion of mTOR signaling. Plays a role in the radial and longitudinal extension of the myelin sheath in Schwann cells. May modulate SC6A1/GAT1-mediated GABA uptake by stabilizing the transporter. Plays a role in the T-cell receptor-mediated activation of NF-kappa-B. Required for localization of EZR to the apical membrane of parietal cells and may play a role in the dynamic remodeling of the apical cytoskeleton. Required for the normal polarized localization of the vesicular marker STX4. Required for the correct trafficking of the myelin proteins PMP22 and MAG. Involved in promoting phosphorylation and cytoplasmic retention of transcriptional coactivators YAP1 and WWTR1/TAZ which leads to suppression of TGFB1-dependent transcription of target genes such as CCN2/CTGF, SERPINE1/PAI1, SNAI1/SNAIL1 and SMAD7. (Microbial infection) Acts as an interaction partner for human coronaviruses SARS-CoV and, probably, SARS-CoV-2 envelope protein E which results in delayed formation of tight junctions and disregulation of cell polarity. The polypeptide is Protein PALS1 (Homo sapiens (Human)).